Here is a 240-residue protein sequence, read N- to C-terminus: UDP-2,3-diacylglucosamine hydrolase (240 aa).

Mn(2+) is bound by residues Asp-8, His-10, Asp-41, Asn-79, and His-114. Residue 79–80 participates in substrate binding; it reads NR. 5 residues coordinate substrate: Asp-122, Ser-160, Asn-164, Lys-167, and His-195. Mn(2+)-binding residues include His-195 and His-197.

The protein belongs to the LpxH family. It depends on Mn(2+) as a cofactor.

Its subcellular location is the cell inner membrane. The catalysed reaction is UDP-2-N,3-O-bis[(3R)-3-hydroxytetradecanoyl]-alpha-D-glucosamine + H2O = 2-N,3-O-bis[(3R)-3-hydroxytetradecanoyl]-alpha-D-glucosaminyl 1-phosphate + UMP + 2 H(+). Its pathway is glycolipid biosynthesis; lipid IV(A) biosynthesis; lipid IV(A) from (3R)-3-hydroxytetradecanoyl-[acyl-carrier-protein] and UDP-N-acetyl-alpha-D-glucosamine: step 4/6. In terms of biological role, hydrolyzes the pyrophosphate bond of UDP-2,3-diacylglucosamine to yield 2,3-diacylglucosamine 1-phosphate (lipid X) and UMP by catalyzing the attack of water at the alpha-P atom. Involved in the biosynthesis of lipid A, a phosphorylated glycolipid that anchors the lipopolysaccharide to the outer membrane of the cell. The sequence is that of UDP-2,3-diacylglucosamine hydrolase from Klebsiella pneumoniae subsp. pneumoniae (strain ATCC 700721 / MGH 78578).